The following is a 125-amino-acid chain: Large ribosomal subunit protein bL12 (125 aa).

This sequence belongs to the bacterial ribosomal protein bL12 family. Homodimer. Part of the ribosomal stalk of the 50S ribosomal subunit. Forms a multimeric L10(L12)X complex, where L10 forms an elongated spine to which 2 to 4 L12 dimers bind in a sequential fashion. Binds GTP-bound translation factors.

Forms part of the ribosomal stalk which helps the ribosome interact with GTP-bound translation factors. Is thus essential for accurate translation. The protein is Large ribosomal subunit protein bL12 of Porphyromonas gingivalis (strain ATCC 33277 / DSM 20709 / CIP 103683 / JCM 12257 / NCTC 11834 / 2561).